We begin with the raw amino-acid sequence, 404 residues long: uncharacterized protein (404 aa).

Residues 1–21 form the signal peptide; sequence MRKLGLALSIMGLLLVSIVAG. At C22 the chain carries N-acetylcysteine. Residue C22 is the site of S-archaeol cysteine attachment.

This sequence belongs to the BMP lipoprotein family.

It is found in the cell membrane. This is an uncharacterized protein from Pyrococcus abyssi (strain GE5 / Orsay).